Reading from the N-terminus, the 677-residue chain is Forkhead box protein P1 (677 aa).

Residues 1 to 18 (MMQESGTETKSNGSAIQN) are compositionally biased toward polar residues. Residues 1–43 (MMQESGTETKSNGSAIQNGSGGSNHLLECGGLREGRSNGETPA) are disordered. Serine 83 is modified (phosphoserine). Over residues 270–283 (IMNPHASTNGQLSV) the composition is skewed to polar residues. Residues 270 to 298 (IMNPHASTNGQLSVHTPKRESLSHEEHPH) form a disordered region. Positions 286–298 (PKRESLSHEEHPH) are enriched in basic and acidic residues. A Glycyl lysine isopeptide (Lys-Gly) (interchain with G-Cter in SUMO2) cross-link involves residue lysine 287. The C2H2-type zinc-finger motif lies at 306–331 (GVCKWPGCEAVCEDFQSFLKHLNSEH). A leucine-zipper region spans residues 348–369 (VQQLELQLAKDKERLQAMMTHL). Residues lysine 372 and lysine 377 each participate in a glycyl lysine isopeptide (Lys-Gly) (interchain with G-Cter in SUMO2) cross-link. Positions 382–386 (PLNLV) are CTBP1-binding. The segment covering 390–403 (TLSKSASEASPQSL) has biased composition (polar residues). Positions 390 to 422 (TLSKSASEASPQSLPHTPTTPTAPLTPVTQGPS) are disordered. The span at 404–418 (PHTPTTPTAPLTPVT) shows a compositional bias: low complexity. Lysine 442 is covalently cross-linked (Glycyl lysine isopeptide (Lys-Gly) (interchain with G-Cter in SUMO2)). The fork-head DNA-binding region spans 465-555 (RPPFTYASLI…PQKISGNPSL (91 aa)). Residues 611-677 (EHTNSNESDS…EDEPVNEDME (67 aa)) are disordered. Polar residues predominate over residues 612 to 623 (HTNSNESDSSPG). Phosphothreonine is present on threonine 653. Serine 658 carries the phosphoserine modification. A compositionally biased stretch (acidic residues) spans 667-677 (YEDEPVNEDME).

In terms of assembly, forms homodimers and heterodimers with FOXP2 and FOXP4. Dimerization is required for DNA-binding. Self-associates. Interacts with CTBP1. Interacts with NCOR2 and AR. Interacts with FOXP2. Interacts with TBR1. Interacts with AURKA; this interaction facilitates the phosphorylation of FOXP1, which suppresses the expression of FBXL7. Interacts with ZMYM2. As to expression, isoform 8 is specifically expressed in embryonic stem cells.

Its subcellular location is the nucleus. Its function is as follows. Transcriptional repressor. Can act with CTBP1 to synergistically repress transcription but CTPBP1 is not essential. Plays an important role in the specification and differentiation of lung epithelium. Acts cooperatively with FOXP4 to regulate lung secretory epithelial cell fate and regeneration by restricting the goblet cell lineage program; the function may involve regulation of AGR2. Essential transcriptional regulator of B-cell development. Involved in regulation of cardiac muscle cell proliferation. Involved in the columnar organization of spinal motor neurons. Promotes the formation of the lateral motor neuron column (LMC) and the preganglionic motor column (PGC) and is required for respective appropriate motor axon projections. The segment-appropriate generation of spinal cord motor columns requires cooperation with other Hox proteins. Can regulate PITX3 promoter activity; may promote midbrain identity in embryonic stem cell-derived dopamine neurons by regulating PITX3. Negatively regulates the differentiation of T follicular helper cells T(FH)s. Involved in maintenance of hair follicle stem cell quiescence; the function probably involves regulation of FGF18. Represses transcription of various pro-apoptotic genes and cooperates with NF-kappa B-signaling in promoting B-cell expansion by inhibition of caspase-dependent apoptosis. Binds to CSF1R promoter elements and is involved in regulation of monocyte differentiation and macrophage functions; repression of CSF1R in monocytes seems to involve NCOR2 as corepressor. Involved in endothelial cell proliferation, tube formation and migration indicative for a role in angiogenesis; the role in neovascularization seems to implicate suppression of SEMA5B. Can negatively regulate androgen receptor signaling. Acts as a transcriptional activator of the FBXL7 promoter; this activity is regulated by AURKA. Functionally, involved in transcriptional regulation in embryonic stem cells (ESCs). Stimulates expression of transcription factors that are required for pluripotency and decreases expression of differentiation-associated genes. Has distinct DNA-binding specifities as compared to the canonical form and preferentially binds DNA with the sequence 5'-CGATACAA-3' (or closely related sequences). Promotes ESC self-renewal and pluripotency. The protein is Forkhead box protein P1 (FOXP1) of Homo sapiens (Human).